The sequence spans 131 residues: Small ribosomal subunit protein uS8 (131 aa).

It belongs to the universal ribosomal protein uS8 family. As to quaternary structure, part of the 30S ribosomal subunit. Contacts proteins S5 and S12.

Its function is as follows. One of the primary rRNA binding proteins, it binds directly to 16S rRNA central domain where it helps coordinate assembly of the platform of the 30S subunit. The polypeptide is Small ribosomal subunit protein uS8 (Nautilia profundicola (strain ATCC BAA-1463 / DSM 18972 / AmH)).